A 141-amino-acid chain; its full sequence is Large ribosomal subunit protein uL11 (141 aa).

The protein belongs to the universal ribosomal protein uL11 family. In terms of assembly, part of the ribosomal stalk of the 50S ribosomal subunit. Interacts with L10 and the large rRNA to form the base of the stalk. L10 forms an elongated spine to which L12 dimers bind in a sequential fashion forming a multimeric L10(L12)X complex. In terms of processing, one or more lysine residues are methylated.

Functionally, forms part of the ribosomal stalk which helps the ribosome interact with GTP-bound translation factors. In Levilactobacillus brevis (strain ATCC 367 / BCRC 12310 / CIP 105137 / JCM 1170 / LMG 11437 / NCIMB 947 / NCTC 947) (Lactobacillus brevis), this protein is Large ribosomal subunit protein uL11.